The sequence spans 856 residues: DNA mismatch repair protein MutS (856 aa).

607–614 serves as a coordination point for ATP; the sequence is GPNMSGKS.

The protein belongs to the DNA mismatch repair MutS family.

Its function is as follows. This protein is involved in the repair of mismatches in DNA. It is possible that it carries out the mismatch recognition step. This protein has a weak ATPase activity. The protein is DNA mismatch repair protein MutS of Lactobacillus delbrueckii subsp. bulgaricus (strain ATCC BAA-365 / Lb-18).